A 512-amino-acid polypeptide reads, in one-letter code: Histidine ammonia-lyase (512 aa).

Positions 142–144 (ASG) form a cross-link, 5-imidazolinone (Ala-Gly). 2,3-didehydroalanine (Ser) is present on Ser-143.

The protein belongs to the PAL/histidase family. Contains an active site 4-methylidene-imidazol-5-one (MIO), which is formed autocatalytically by cyclization and dehydration of residues Ala-Ser-Gly.

It localises to the cytoplasm. The catalysed reaction is L-histidine = trans-urocanate + NH4(+). It functions in the pathway amino-acid degradation; L-histidine degradation into L-glutamate; N-formimidoyl-L-glutamate from L-histidine: step 1/3. This chain is Histidine ammonia-lyase, found in Bartonella henselae (strain ATCC 49882 / DSM 28221 / CCUG 30454 / Houston 1) (Rochalimaea henselae).